The chain runs to 477 residues: Shikimate biosynthesis protein AroDE (477 aa).

The interval 1-209 is 3-dehydroquinate dehydratase; sequence MLCATVSGPS…LEELLSYNYS (209 aa). Residues Ser21, 29 to 31, and 56 to 58 contribute to the 3-dehydroquinate site; these read ELR and TFR. The active-site Proton donor/acceptor; for 3-dehydroquinate dehydratase activity is His111. The active-site Schiff-base intermediate with substrate; for 3-dehydroquinate dehydratase activity is the Lys134. 3-dehydroquinate contacts are provided by Arg172 and Gln197. Residues 210 to 477 are shikimate 5-dehydrogenase; it reads KLSEKSHIYG…NYVKNFMAKV (268 aa). A shikimate-binding site is contributed by 228-230; that stretch reads SIS. Lys279 functions as the Proton acceptor; for shikimate dehydrogenase activity in the catalytic mechanism. Positions 300 and 315 each coordinate shikimate. NADP(+) is bound by residues 339–343, 362–364, and Gly438; these read GAGGA and NRT. Gln445 lines the shikimate pocket.

In the N-terminal section; belongs to the type-I 3-dehydroquinase family. This sequence in the C-terminal section; belongs to the shikimate dehydrogenase family.

The enzyme catalyses 3-dehydroquinate = 3-dehydroshikimate + H2O. The catalysed reaction is shikimate + NADP(+) = 3-dehydroshikimate + NADPH + H(+). The protein operates within metabolic intermediate biosynthesis; chorismate biosynthesis; chorismate from D-erythrose 4-phosphate and phosphoenolpyruvate: step 3/7. It participates in metabolic intermediate biosynthesis; chorismate biosynthesis; chorismate from D-erythrose 4-phosphate and phosphoenolpyruvate: step 4/7. Functionally, bifunctional enzyme that catalyzes two sequential steps of the aromatic amino acids biosynthetic pathway. In the first reaction, the AroD domain catalyzes the cis-dehydration of 3-dehydroquinate (DHQ) and introduces the first double bond of the aromatic ring to yield 3-dehydroshikimate; in the second reaction, the AroE domain catalyzes the reversible NADPH linked reduction of 3-dehydroshikimate (DHSA) to yield shikimate (SA). This is Shikimate biosynthesis protein AroDE from Chlamydia pneumoniae (Chlamydophila pneumoniae).